The following is a 577-amino-acid chain: Efflux pump notK' (577 aa).

Asparagine 62 and asparagine 84 each carry an N-linked (GlcNAc...) asparagine glycan. Helical transmembrane passes span 104–124, 151–171, 189–209, 241–261, and 265–285; these read AAIA…PVAL, LAVT…MLGI, AGIG…LGLV, NPTM…LMMY, and GAVI…TTPV. N-linked (GlcNAc...) asparagine glycosylation occurs at asparagine 320. A run of 5 helical transmembrane segments spans residues 328–348, 373–393, 413–433, 434–454, and 476–496; these read FGLA…GTLY, VDAI…TAFV, GICF…PPWA, TGST…EINW, and IADG…GVWV. Low complexity predominate over residues 555–566; the sequence is MPPNGSMSSGSP. The interval 555–577 is disordered; sequence MPPNGSMSSGSPEQVAEKAVGKY. N-linked (GlcNAc...) asparagine glycosylation is present at asparagine 558.

Belongs to the nucleobase:cation symporter-2 (NCS2) (TC 2.A.40) family. Azg-like subfamily.

The protein resides in the cell membrane. Efflux pump; part of the gene cluster that mediates the biosynthesis of notoamide, a fungal indole alkaloid that belongs to a family of natural products containing a characteristic bicyclo[2.2.2]diazaoctane core. The protein is Efflux pump notK' of Aspergillus versicolor.